We begin with the raw amino-acid sequence, 258 residues long: NAD kinase (258 aa).

Residue Asp-51 is the Proton acceptor of the active site. NAD(+) contacts are provided by residues 51 to 52 (DG), Lys-56, 119 to 120 (ND), Lys-130, Asp-149, 160 to 165 (TAYSLS), and Ala-184.

It belongs to the NAD kinase family. Requires a divalent metal cation as cofactor.

The protein localises to the cytoplasm. The catalysed reaction is NAD(+) + ATP = ADP + NADP(+) + H(+). Its function is as follows. Involved in the regulation of the intracellular balance of NAD and NADP, and is a key enzyme in the biosynthesis of NADP. Catalyzes specifically the phosphorylation on 2'-hydroxyl of the adenosine moiety of NAD to yield NADP. The protein is NAD kinase of Thermotoga petrophila (strain ATCC BAA-488 / DSM 13995 / JCM 10881 / RKU-1).